The sequence spans 101 residues: Large ribosomal subunit protein uL24 (101 aa).

This sequence belongs to the universal ribosomal protein uL24 family. In terms of assembly, part of the 50S ribosomal subunit.

One of two assembly initiator proteins, it binds directly to the 5'-end of the 23S rRNA, where it nucleates assembly of the 50S subunit. Its function is as follows. One of the proteins that surrounds the polypeptide exit tunnel on the outside of the subunit. The sequence is that of Large ribosomal subunit protein uL24 from Jannaschia sp. (strain CCS1).